A 234-amino-acid chain; its full sequence is Large ribosomal subunit protein uL1 (234 aa).

It belongs to the universal ribosomal protein uL1 family. In terms of assembly, part of the 50S ribosomal subunit.

Binds directly to 23S rRNA. The L1 stalk is quite mobile in the ribosome, and is involved in E site tRNA release. Its function is as follows. Protein L1 is also a translational repressor protein, it controls the translation of the L11 operon by binding to its mRNA. This chain is Large ribosomal subunit protein uL1, found in Tolumonas auensis (strain DSM 9187 / NBRC 110442 / TA 4).